The chain runs to 305 residues: Probable aspartoacylase (305 aa).

Residues His13 and Glu16 each coordinate Zn(2+). Residues Arg55 and 62–63 (NR) each bind substrate. Residue His105 coordinates Zn(2+). Substrate is bound by residues Glu163 and Tyr273.

This sequence belongs to the AspA/AstE family. Aspartoacylase subfamily. Zn(2+) serves as cofactor.

The enzyme catalyses an N-acyl-L-aspartate + H2O = a carboxylate + L-aspartate. This is Probable aspartoacylase from Prochlorococcus marinus (strain NATL2A).